The chain runs to 267 residues: 2-dehydro-3-deoxyphosphooctonate aldolase (267 aa).

This sequence belongs to the KdsA family.

Its subcellular location is the cytoplasm. The catalysed reaction is D-arabinose 5-phosphate + phosphoenolpyruvate + H2O = 3-deoxy-alpha-D-manno-2-octulosonate-8-phosphate + phosphate. Its pathway is carbohydrate biosynthesis; 3-deoxy-D-manno-octulosonate biosynthesis; 3-deoxy-D-manno-octulosonate from D-ribulose 5-phosphate: step 2/3. It functions in the pathway bacterial outer membrane biogenesis; lipopolysaccharide biosynthesis. This chain is 2-dehydro-3-deoxyphosphooctonate aldolase, found in Campylobacter jejuni subsp. doylei (strain ATCC BAA-1458 / RM4099 / 269.97).